We begin with the raw amino-acid sequence, 160 residues long: Cytochrome b6-f complex subunit 4 (160 aa).

3 helical membrane passes run 36–56 (LLYI…GLAV), 95–115 (LLGI…PFIE), and 128–148 (IAMA…IGAC).

This sequence belongs to the cytochrome b family. PetD subfamily. The 4 large subunits of the cytochrome b6-f complex are cytochrome b6, subunit IV (17 kDa polypeptide, PetD), cytochrome f and the Rieske protein, while the 4 small subunits are PetG, PetL, PetM and PetN. The complex functions as a dimer.

Its subcellular location is the cellular thylakoid membrane. Functionally, component of the cytochrome b6-f complex, which mediates electron transfer between photosystem II (PSII) and photosystem I (PSI), cyclic electron flow around PSI, and state transitions. The sequence is that of Cytochrome b6-f complex subunit 4 from Prochlorococcus marinus (strain MIT 9303).